Consider the following 249-residue polypeptide: Fasciclin-like arabinogalactan protein 12 (249 aa).

The signal sequence occupies residues M1–S24. An FAS1 domain is found at P37–L181. N39, N71, N143, N152, and N159 each carry an N-linked (GlcNAc...) asparagine glycan. A disordered region spans residues V186–A219. D220 carries GPI-anchor amidated aspartate lipidation. The propeptide at A221 to L249 is removed in mature form.

This sequence belongs to the fasciclin-like AGP family.

The protein resides in the cell membrane. May be a cell surface adhesion protein. This is Fasciclin-like arabinogalactan protein 12 (FLA12) from Arabidopsis thaliana (Mouse-ear cress).